Consider the following 233-residue polypeptide: Orotidine 5'-phosphate decarboxylase (233 aa).

Substrate is bound by residues Asp11, Lys34, Asp61–Thr70, Thr117, Arg179, Gln189, Gly209, and Arg210. Lys63 (proton donor) is an active-site residue.

This sequence belongs to the OMP decarboxylase family. Type 1 subfamily. Homodimer.

It carries out the reaction orotidine 5'-phosphate + H(+) = UMP + CO2. It functions in the pathway pyrimidine metabolism; UMP biosynthesis via de novo pathway; UMP from orotate: step 2/2. Catalyzes the decarboxylation of orotidine 5'-monophosphate (OMP) to uridine 5'-monophosphate (UMP). In Streptococcus agalactiae serotype III (strain NEM316), this protein is Orotidine 5'-phosphate decarboxylase.